We begin with the raw amino-acid sequence, 133 residues long: Small ribosomal subunit protein eS17 (133 aa).

The protein belongs to the eukaryotic ribosomal protein eS17 family.

In Spodoptera frugiperda (Fall armyworm), this protein is Small ribosomal subunit protein eS17 (RpS17).